Consider the following 238-residue polypeptide: Proenkephalin-A (238 aa).

A signal peptide spans 1–25 (MAASALSTCLWMLVLGTCVSLVVGT). 3 disulfides stabilise this stretch: cysteine 27–cysteine 50, cysteine 31–cysteine 54, and cysteine 34–cysteine 66. The disordered stretch occupies residues 76-103 (QSPLASQQDQERVDAMMADEEDATSPEH). Propeptides lie at residues 124–167 (SSAS…AEAV), 177–195 (ADRG…GRVL), and 206–230 (VGRP…SELQ).

It belongs to the opioid neuropeptide precursor family. As to expression, expressed by the venom gland. Moderately expressed in the venom gland transcriptome.

The protein localises to the secreted. Met-enkephalins compete with and mimic the effects of opiate drugs. They play a role in a number of physiologic functions, including pain perception and responses to stress. Enkephalin peptides found in Meiacanthus fangblennies induce physiological effects via their interaction with delta-type opioid receptors (OPRD1) (tested on M.grammistes). Therefore, finding a proenkephalin sequence in M.atrodorsalis venom suggests that this protein act in the same manner. The polypeptide is Proenkephalin-A (Meiacanthus atrodorsalis (Forktail blenny)).